A 285-amino-acid chain; its full sequence is Small ribosomal subunit protein uS2 (285 aa).

Residues 228–285 (RAGLSADKDAKPEAGAGEPLAEWEQELLSQAAPAAEAEAAPAAEAEAAPAAEAPATEA) are disordered. Over residues 258–285 (AAPAAEAEAAPAAEAEAAPAAEAPATEA) the composition is skewed to low complexity.

Belongs to the universal ribosomal protein uS2 family.

In Rhodococcus erythropolis (strain PR4 / NBRC 100887), this protein is Small ribosomal subunit protein uS2.